A 235-amino-acid chain; its full sequence is 7-cyano-7-deazaguanine synthase (235 aa).

7–17 (CSGGLDSVSLA) is a binding site for ATP. Residues cysteine 185, cysteine 193, cysteine 196, and cysteine 199 each contribute to the Zn(2+) site.

This sequence belongs to the QueC family. Zn(2+) serves as cofactor.

The enzyme catalyses 7-carboxy-7-deazaguanine + NH4(+) + ATP = 7-cyano-7-deazaguanine + ADP + phosphate + H2O + H(+). Its pathway is purine metabolism; 7-cyano-7-deazaguanine biosynthesis. Its function is as follows. Catalyzes the ATP-dependent conversion of 7-carboxy-7-deazaguanine (CDG) to 7-cyano-7-deazaguanine (preQ(0)). In Allorhizobium ampelinum (strain ATCC BAA-846 / DSM 112012 / S4) (Agrobacterium vitis (strain S4)), this protein is 7-cyano-7-deazaguanine synthase.